The chain runs to 183 residues: Small ribosomal subunit protein uS4c (183 aa).

Residues 82 to 143 enclose the S4 RNA-binding domain; the sequence is MRLDNILFRL…KQRSKALIQN (62 aa).

Belongs to the universal ribosomal protein uS4 family. In terms of assembly, part of the 30S ribosomal subunit. Contacts protein S5. The interaction surface between S4 and S5 is involved in control of translational fidelity.

Its subcellular location is the plastid. The protein resides in the chloroplast. Functionally, one of the primary rRNA binding proteins, it binds directly to 16S rRNA where it nucleates assembly of the body of the 30S subunit. With S5 and S12 plays an important role in translational accuracy. This chain is Small ribosomal subunit protein uS4c (rps4), found in Schizorhiza neglecta (Lapeirousia neglecta).